Here is a 389-residue protein sequence, read N- to C-terminus: S-adenosylmethionine synthase (389 aa).

His-15 contacts ATP. A Mg(2+)-binding site is contributed by Asp-17. Glu-43 provides a ligand contact to K(+). Glu-56 and Gln-99 together coordinate L-methionine. A flexible loop region spans residues 99–109 (QSSDIQYSIDH). Residues 166-168 (DAK), 232-233 (RF), Asp-241, 247-248 (RK), Ser-264, and Lys-268 contribute to the ATP site. Asp-241 is a binding site for L-methionine. An L-methionine-binding site is contributed by Lys-272.

This sequence belongs to the AdoMet synthase family. As to quaternary structure, homotetramer; dimer of dimers. The cofactor is Mg(2+). Requires K(+) as cofactor.

The protein localises to the cytoplasm. It carries out the reaction L-methionine + ATP + H2O = S-adenosyl-L-methionine + phosphate + diphosphate. It participates in amino-acid biosynthesis; S-adenosyl-L-methionine biosynthesis; S-adenosyl-L-methionine from L-methionine: step 1/1. Its function is as follows. Catalyzes the formation of S-adenosylmethionine (AdoMet) from methionine and ATP. The overall synthetic reaction is composed of two sequential steps, AdoMet formation and the subsequent tripolyphosphate hydrolysis which occurs prior to release of AdoMet from the enzyme. The polypeptide is S-adenosylmethionine synthase (Blochmanniella pennsylvanica (strain BPEN)).